Reading from the N-terminus, the 706-residue chain is MQLLCVFCLVLLWEVGAASLSEVKLHLDIEGHASHYTIPWTELMAKVPGLSPEALWREANVTEDLASMLNRYKLIYKTSGTLGIALAEPVDIPAVSEGSMQVDASKVHPGVISGLNSPACMLSAPLEKQLFYYIGTMLPNTRPHSYVFYQLRCHLSYVALSINGDKFQYTGAMTSKFLMGTYKRVTEKGDEHVLSLIFGKTKDLPDLRGPFSYPSLTSAQSGDYSLVIVTTFVHYANFHNYFVPNLKDMFSRAVTMTAASYARYVLQKLVLLEMKGGCREPELDTETLTTMFEVSVAFFKVGHAVGETGNGCVDLRWLAKSFFELTVLKDIIGICYGATVKGMQSYGLERLAAVLMATVKMEELGHLTTEKQEYALRLATVGYPKAGVYSGLIGGATSVLLSAYNRHPLFQPLHTVMRETLFIGSHVVLRELRLNVTTQGPNLALYQLLSTALCSALEIGEVLRGLALGTESGLFSPCYLSLRFDLTRDKLLSMAPQEAMLDQAAVSNAVDGFLGRLSLEREDRDAWHLPAYKCVDRLDKVLMIIPLINVTFIISSDREVRGSALYEASTTYLSSSLFLSPVIMNKCSQGAVAGEPRQIPKIQNFTRTQKSCIFCGFALLSYDEKEGLETTTYITSQEVQNSILSSNYFDFDNLHVHYLLLTTNGTVMEIAGLYEERAHVVLAIILYFIAFALGIFLVHKIVMFFL.

A signal peptide spans 1–18 (MQLLCVFCLVLLWEVGAA). Residues 19-682 (SLSEVKLHLD…LYEERAHVVL (664 aa)) lie on the Virion surface side of the membrane. The N-linked (GlcNAc...) asparagine; by host glycan is linked to N60. Positions 165–229 (DKFQYTGAMT…QSGDYSLVIV (65 aa)) are interaction with gL. C278 and C335 are oxidised to a cystine. N-linked (GlcNAc...) asparagine; by host glycosylation occurs at N435. Disulfide bonds link C454–C478 and C534–C587. 2 N-linked (GlcNAc...) asparagine; by host glycosylation sites follow: N549 and N604. Cysteines 612 and 615 form a disulfide. N-linked (GlcNAc...) asparagine; by host glycosylation occurs at N664. A helical transmembrane segment spans residues 683–703 (AIILYFIAFALGIFLVHKIVM). Over 704-706 (FFL) the chain is Intravirion.

It belongs to the herpesviridae glycoprotein H family. In terms of assembly, interacts with glycoprotein L (gL); this interaction is necessary for the correct processing and cell surface expression of gH. The heterodimer gH/gL seems to interact with gB trimers during fusion. The heterodimer gH/gL interacts with host EPHA2 to facilitate virus internalization and fusion. Interacts with glycoprotein 42/BZLF2. N-glycosylated, O-glycosylated, and sialylated.

The protein resides in the virion membrane. It is found in the host cell membrane. The protein localises to the host endosome membrane. Functionally, the heterodimer glycoprotein H-glycoprotein L is required for the fusion of viral and plasma membranes leading to virus entry into the host cell. Following initial binding to host receptor, membrane fusion is mediated by the fusion machinery composed of gB and the heterodimer gH/gL. May also be involved in the fusion between the virion envelope and the outer nuclear membrane during virion morphogenesis. The heterodimer gH/gL targets also host EPHA2 to promote viral entry. This chain is Envelope glycoprotein H, found in Homo sapiens (Human).